The chain runs to 157 residues: MRLIAGVLAGFLVICEVTSTSESDRTMAYQTADTDNTQPTGAVENSIASKQFLRTDVVMNRGEERGFEALKKLLPGTKIVAKDGASFSGAFVRKMLGNNAFRNQEFKRWTRSDLDGTALRQMLGDMNKKGRTELLNRYTAFLGPKDGLVYHKPGPIV.

Positions 1 to 23 are cleaved as a signal peptide; it reads MRLIAGVLAGFLVICEVTSTSES. The RxLR-dEER signature appears at 51–65; it reads QFLRTDVVMNRGEER.

The protein belongs to the RxLR effector family.

Its subcellular location is the secreted. It localises to the host cytoplasm. It is found in the host nucleus. Its function is as follows. Effector that might be involved in host plant infection. This Phytophthora infestans (strain T30-4) (Potato late blight agent) protein is RxLR effector protein PITG_04049.